The sequence spans 233 residues: NAD(P)H-hydrate epimerase (233 aa).

The region spanning 15-218 is the YjeF N-terminal domain; it reads SQQFDVELMS…KLQEKYNFIV (204 aa). A (6S)-NADPHX-binding site is contributed by 67–71; that stretch reads NNGGD. K(+)-binding residues include Asn68 and Asp128. (6S)-NADPHX-binding positions include 132 to 138, Tyr143, and Asp161; that span reads GFSFKPP. Ser164 contributes to the K(+) binding site.

It belongs to the NnrE/AIBP family. K(+) is required as a cofactor.

It catalyses the reaction (6R)-NADHX = (6S)-NADHX. The enzyme catalyses (6R)-NADPHX = (6S)-NADPHX. In terms of biological role, catalyzes the epimerization of the S- and R-forms of NAD(P)HX, a damaged form of NAD(P)H that is a result of enzymatic or heat-dependent hydration. This is a prerequisite for the S-specific NAD(P)H-hydrate dehydratase to allow the repair of both epimers of NAD(P)HX. The sequence is that of NAD(P)H-hydrate epimerase from Paramecium tetraurelia.